The sequence spans 204 residues: Calexcitin-1 (204 aa).

EF-hand domains are found at residues 25-61, 75-110, and 115-150; these read FLVK…VRDI, SLAA…TDAK, and WFKD…YGFD. Residues Asp39, Asn41, Ser43, Gln45, Asp50, Asp88, Asp90, Asp92, Glu99, Asp128, Ser130, Asp132, and Glu139 each coordinate Ca(2+).

The protein is Calexcitin-1 (cex-1) of Caenorhabditis elegans.